Consider the following 69-residue polypeptide: UPF0150 protein Ta0767 (69 aa).

It belongs to the UPF0150 family.

This is UPF0150 protein Ta0767 from Thermoplasma acidophilum (strain ATCC 25905 / DSM 1728 / JCM 9062 / NBRC 15155 / AMRC-C165).